Here is a 794-residue protein sequence, read N- to C-terminus: Protein smoothened (794 aa).

Residues 1–15 (GPCWLWALALGLALG) form the signal peptide. Topologically, residues 16–201 (PRRCPAAPLN…FTETEHREMH (186 aa)) are extracellular. N25 carries N-linked (GlcNAc...) asparagine glycosylation. Disulfide bonds link C34–C148, C40–C104, C48–C97, C88–C124, and C117–C139. Residues 35 to 151 (RRPAACERLR…DRFPEGCPNE (117 aa)) enclose the FZ domain. A cholesterol-binding site is contributed by D65. N158 carries N-linked (GlcNAc...) asparagine glycosylation. 2 cysteine pairs are disulfide-bonded: C163/C183 and C187/C264. Residues 202–222 (VYIAFSSVTISCTFFTLATFV) form a helical membrane-spanning segment. At 223–231 (ADWRNSNRY) the chain is on the cytoplasmic side. The chain crosses the membrane as a helical span at residues 232-252 (PAVILFYVNACFFVGSIGCVA). The Extracellular portion of the chain corresponds to 253–283 (QFMDGARDEIVCRADGTMRLGEPTSNETLSC). N278 is a glycosylation site (N-linked (GlcNAc...) asparagine). An intrachain disulfide couples C283 to C359. The helical transmembrane segment at 284 to 304 (VIIFVIVYYSLMSGVIWFVML) threads the bilayer. Residues 305-327 (TYAWHTSFKALGTTYQPLLGKTS) are Cytoplasmic-facing. Residues 328 to 348 (YFHLITWSIPFVLTVAILAVA) traverse the membrane as a helical segment. Topologically, residues 349-371 (QVDGDSVSGICFVGYKNYRYRAG) are extracellular. Y363 lines the cholesterol pocket. The helical transmembrane segment at 372–392 (FVLAPIGLVLIVGGYFLIRGV) threads the bilayer. Over 393 to 420 (MTLFSIKSNHPGLLSEKAASKINETMLR) the chain is Cytoplasmic. The chain crosses the membrane as a helical span at residues 421 to 440 (LGIFGFLAFGFVFITFGCHF). At 441–493 (YDFFNQAEWERSFREYVLCEANVTIATQTNKPIPECEIKNRPSLLVEKINLFA) the chain is on the extracellular side. Residues C459 and C476 are joined by a disulfide bond. An N-linked (GlcNAc...) asparagine glycan is attached at N462. A helical transmembrane segment spans residues 494–514 (MFGTGISMSTWVWTKATLLIW). The Cytoplasmic segment spans residues 515–794 (KRTWCRLTGQ…AELLDADLDF (280 aa)). Disordered regions lie at residues 634–655 (LQKR…CPER) and 723–773 (PFCP…RAGL). The segment covering 637-647 (RSRKKKRRKKK) has biased composition (basic residues).

The protein belongs to the G-protein coupled receptor Fz/Smo family. Homodimer.

It localises to the cell membrane. The protein resides in the cell projection. It is found in the cilium. Functionally, g protein-coupled receptor which associates with the patched protein (PTCH) to transduce hedgehog protein signaling. Binding of sonic hedgehog (SHH) to its receptor patched prevents inhibition of smoothened (SMO) by patched. When active, SMO binds to and sequesters protein kinase A catalytic subunit PRKACA at the cell membrane, preventing PRKACA-mediated phosphorylation of GLI transcription factors which releases the GLI proteins from PRKACA-mediated inhibition and allows for transcriptional activation of hedgehog pathway target genes. The chain is Protein smoothened (SMO) from Gallus gallus (Chicken).